Consider the following 603-residue polypeptide: DNA mismatch repair protein MutL (603 aa).

Belongs to the DNA mismatch repair MutL/HexB family.

Functionally, this protein is involved in the repair of mismatches in DNA. It is required for dam-dependent methyl-directed DNA mismatch repair. May act as a 'molecular matchmaker', a protein that promotes the formation of a stable complex between two or more DNA-binding proteins in an ATP-dependent manner without itself being part of a final effector complex. The sequence is that of DNA mismatch repair protein MutL from Nitrobacter winogradskyi (strain ATCC 25391 / DSM 10237 / CIP 104748 / NCIMB 11846 / Nb-255).